The chain runs to 366 residues: Histidinol-phosphate aminotransferase 2 (366 aa).

Polar residues predominate over residues 1-11 (MQVKDQLSSLQ). Residues 1–21 (MQVKDQLSSLQPYKPGKSPEQ) form a disordered region. The residue at position 222 (Lys-222) is an N6-(pyridoxal phosphate)lysine.

This sequence belongs to the class-II pyridoxal-phosphate-dependent aminotransferase family. Histidinol-phosphate aminotransferase subfamily. As to quaternary structure, homodimer. It depends on pyridoxal 5'-phosphate as a cofactor.

The enzyme catalyses L-histidinol phosphate + 2-oxoglutarate = 3-(imidazol-4-yl)-2-oxopropyl phosphate + L-glutamate. It functions in the pathway amino-acid biosynthesis; L-histidine biosynthesis; L-histidine from 5-phospho-alpha-D-ribose 1-diphosphate: step 7/9. This Bacillus thuringiensis subsp. konkukian (strain 97-27) protein is Histidinol-phosphate aminotransferase 2.